A 59-amino-acid polypeptide reads, in one-letter code: Large ribosomal subunit protein bL33 (59 aa).

This sequence belongs to the bacterial ribosomal protein bL33 family.

This is Large ribosomal subunit protein bL33 from Borreliella afzelii (strain PKo) (Borrelia afzelii).